A 191-amino-acid polypeptide reads, in one-letter code: Protein YceI (191 aa).

The first 22 residues, 1 to 22, serve as a signal peptide directing secretion; sequence MKKSLLGLTFASLMFSAGSAVA.

Belongs to the UPF0312 family. Type 1 subfamily.

It localises to the periplasm. This chain is Protein YceI, found in Escherichia coli O6:H1 (strain CFT073 / ATCC 700928 / UPEC).